A 208-amino-acid polypeptide reads, in one-letter code: uncharacterized protein (208 aa).

This is an uncharacterized protein from Ictalurid herpesvirus 1 (strain Auburn) (IcHV-1).